Consider the following 124-residue polypeptide: Large ribosomal subunit protein uL18 (124 aa).

This sequence belongs to the universal ribosomal protein uL18 family. Part of the 50S ribosomal subunit; part of the 5S rRNA/L5/L18/L25 subcomplex. Contacts the 5S and 23S rRNAs.

This is one of the proteins that bind and probably mediate the attachment of the 5S RNA into the large ribosomal subunit, where it forms part of the central protuberance. The protein is Large ribosomal subunit protein uL18 of Aquifex pyrophilus.